The primary structure comprises 86 residues: Large ribosomal subunit protein uL23 (86 aa).

Belongs to the universal ribosomal protein uL23 family. As to quaternary structure, part of the 50S ribosomal subunit. Contacts protein L29.

Functionally, binds to 23S rRNA. One of the proteins that surrounds the polypeptide exit tunnel on the outside of the ribosome. This chain is Large ribosomal subunit protein uL23, found in Methanosphaera stadtmanae (strain ATCC 43021 / DSM 3091 / JCM 11832 / MCB-3).